We begin with the raw amino-acid sequence, 89 residues long: DNA/RNA-binding protein Alba (89 aa).

Lysine 11 carries the post-translational modification N6-acetyllysine.

The protein belongs to the histone-like Alba family. Post-translationally, acetylated. Acetylation at Lys-11 decreases DNA-binding affinity.

The protein resides in the cytoplasm. It localises to the chromosome. Its function is as follows. Binds double-stranded DNA tightly but without sequence specificity. Involved in DNA compaction. In Thermoplasma volcanium (strain ATCC 51530 / DSM 4299 / JCM 9571 / NBRC 15438 / GSS1), this protein is DNA/RNA-binding protein Alba.